We begin with the raw amino-acid sequence, 143 residues long: Small ribosomal subunit protein uS12 (143 aa).

Proline 62 carries the post-translational modification Hydroxyproline.

Belongs to the universal ribosomal protein uS12 family.

The chain is Small ribosomal subunit protein uS12 (rps23) from Dictyostelium discoideum (Social amoeba).